The primary structure comprises 102 residues: Carboxysome shell protein CcmK2 (102 aa).

Residues 4–90 (AVGMIETLGF…PHENLEYVLP (87 aa)) enclose the BMC domain.

Belongs to the bacterial microcompartments protein family. CcmK subfamily. In terms of assembly, homohexamer. Interacts with CcmO in the carboxysome. Interacts with CcmN.

Its subcellular location is the carboxysome. One of the shell proteins of the carboxysome, a polyhedral inclusion where RuBisCO (ribulose bisphosphate carboxylase, rbcL-rbcS) is sequestered. Assembles into hexamers which make sheets that form the facets of the polyhedral carboxysome. The hexamer central pore probably regulates metabolite flux. Its function is as follows. The major shell protein of the carboxysome, a polyhedral inclusion where RuBisCO (ribulose bisphosphate carboxylase, rbcL-rbcS) is sequestered. Hexamers make sheets that form the facets of the polyhedral carboxysome. The shell is 4.5 nm thick, as observed for CcmK hexamers. Required for recruitment of CcmO to the pre-carboxysome. In PCC 7942 there are several CcmK paralogs with presumably functional differences; replacing the central pore residues (34-37) with those of either CcmK4 from this organism (Tyr-Met-Arg-Ala) or from an alpha-type carboxysome forming cyanobacterium (CsoS1 of P.marinus strain MIT 9313, Arg-Glu-Phe-Val) allows the bacterium to make carboxysomes, but the expression level is too low to know if the carboxysome is functional for CO(2) fixation. In terms of biological role, beta-carboxysome assembly initiates when soluble RuBisCO is condensed into a liquid matrix in a pre-carboxysome by the RbcS-like domains of probably both CcmM58 and CcmM35. CcmN interacts with the N-terminus of CcmM58, and then recruits the CcmK2 major shell protein via CcmN's encapsulation peptide. Shell formation requires CcmK proteins and CcmO. CcmL caps the otherwise elongated carboxysome. Once fully encapsulated carboxysomes are formed, they migrate within the cell probably via interactions with the cytoskeleton. In Synechococcus elongatus (strain ATCC 33912 / PCC 7942 / FACHB-805) (Anacystis nidulans R2), this protein is Carboxysome shell protein CcmK2.